We begin with the raw amino-acid sequence, 144 residues long: 3-dehydroquinate dehydratase (144 aa).

Tyr-22 serves as the catalytic Proton acceptor. Residues Asn-73, His-79, and Asp-86 each coordinate substrate. His-99 acts as the Proton donor in catalysis. Substrate contacts are provided by residues Ile-100 to Ser-101 and Arg-110.

This sequence belongs to the type-II 3-dehydroquinase family. As to quaternary structure, homododecamer.

It carries out the reaction 3-dehydroquinate = 3-dehydroshikimate + H2O. It participates in metabolic intermediate biosynthesis; chorismate biosynthesis; chorismate from D-erythrose 4-phosphate and phosphoenolpyruvate: step 3/7. Functionally, catalyzes a trans-dehydration via an enolate intermediate. This chain is 3-dehydroquinate dehydratase, found in Clostridium acetobutylicum (strain ATCC 824 / DSM 792 / JCM 1419 / IAM 19013 / LMG 5710 / NBRC 13948 / NRRL B-527 / VKM B-1787 / 2291 / W).